Here is a 429-residue protein sequence, read N- to C-terminus: uncharacterized protein (429 aa).

The span at 1–12 (MSDSKEDIRNGQ) shows a compositional bias: basic and acidic residues. 3 disordered regions span residues 1 to 63 (MSDS…APEA), 257 to 306 (RSRA…SDRM), and 320 to 429 (YRGY…SDSE). Residues 328-362 (EENEEDDLGDFIAEEEEEEEQEEEQEEDEEDEEEV) show a composition bias toward acidic residues. Residues 369-378 (KGFDADKEAS) are compositionally biased toward basic and acidic residues.

The protein belongs to the LEO1 family.

Its subcellular location is the nucleus. This is an uncharacterized protein from Schizosaccharomyces pombe (strain 972 / ATCC 24843) (Fission yeast).